The chain runs to 179 residues: Large ribosomal subunit protein uL5 (179 aa).

Belongs to the universal ribosomal protein uL5 family. In terms of assembly, part of the 50S ribosomal subunit; part of the 5S rRNA/L5/L18/L25 subcomplex. Contacts the 5S rRNA and the P site tRNA. Forms a bridge to the 30S subunit in the 70S ribosome.

Functionally, this is one of the proteins that bind and probably mediate the attachment of the 5S RNA into the large ribosomal subunit, where it forms part of the central protuberance. In the 70S ribosome it contacts protein S13 of the 30S subunit (bridge B1b), connecting the 2 subunits; this bridge is implicated in subunit movement. Contacts the P site tRNA; the 5S rRNA and some of its associated proteins might help stabilize positioning of ribosome-bound tRNAs. This is Large ribosomal subunit protein uL5 from Burkholderia vietnamiensis (strain G4 / LMG 22486) (Burkholderia cepacia (strain R1808)).